We begin with the raw amino-acid sequence, 414 residues long: Serine/threonine-protein kinase 32B (414 aa).

The Protein kinase domain occupies 23–283; that stretch reads FQILRAIGKG…LHDIQSVPYL (261 aa). ATP-binding positions include 29-37 and lysine 52; that span reads IGKGSFGKV. Catalysis depends on aspartate 146, which acts as the Proton acceptor. Residues 374–396 are disordered; it reads QGQGSQLLDTDSRGGGQAQSKLQ.

It belongs to the protein kinase superfamily. Ser/Thr protein kinase family. Mg(2+) serves as cofactor.

The catalysed reaction is L-seryl-[protein] + ATP = O-phospho-L-seryl-[protein] + ADP + H(+). It catalyses the reaction L-threonyl-[protein] + ATP = O-phospho-L-threonyl-[protein] + ADP + H(+). This is Serine/threonine-protein kinase 32B from Homo sapiens (Human).